The following is a 445-amino-acid chain: Exodeoxyribonuclease 7 large subunit (445 aa).

Belongs to the XseA family. In terms of assembly, heterooligomer composed of large and small subunits.

Its subcellular location is the cytoplasm. It carries out the reaction Exonucleolytic cleavage in either 5'- to 3'- or 3'- to 5'-direction to yield nucleoside 5'-phosphates.. Its function is as follows. Bidirectionally degrades single-stranded DNA into large acid-insoluble oligonucleotides, which are then degraded further into small acid-soluble oligonucleotides. This Staphylococcus aureus (strain bovine RF122 / ET3-1) protein is Exodeoxyribonuclease 7 large subunit.